The primary structure comprises 284 residues: Parvulin-like PPIase (284 aa).

The first 20 residues, 1–20 (MKKLSIVLLSVSMLSSIAFA), serve as a signal peptide directing secretion. The region spanning 139–232 (KEQIKVAHIL…YGWHIIKVLE (94 aa)) is the PpiC domain.

Belongs to the PpiC/parvulin rotamase family.

Its subcellular location is the cell outer membrane. The enzyme catalyses [protein]-peptidylproline (omega=180) = [protein]-peptidylproline (omega=0). The chain is Parvulin-like PPIase (plp) from Rickettsia bellii (strain RML369-C).